Here is a 332-residue protein sequence, read N- to C-terminus: Glyceraldehyde-3-phosphate dehydrogenase (332 aa).

NAD(+) is bound by residues 11-12 (RI), Asp-34, Arg-78, and Ser-120. Residues 151–153 (SCT), Thr-182, Arg-197, 210–211 (TG), and Arg-233 contribute to the D-glyceraldehyde 3-phosphate site. Cys-152 functions as the Nucleophile in the catalytic mechanism. Asn-314 is an NAD(+) binding site.

Belongs to the glyceraldehyde-3-phosphate dehydrogenase family. As to quaternary structure, homotetramer.

It localises to the cytoplasm. It carries out the reaction D-glyceraldehyde 3-phosphate + phosphate + NAD(+) = (2R)-3-phospho-glyceroyl phosphate + NADH + H(+). It functions in the pathway carbohydrate degradation; glycolysis; pyruvate from D-glyceraldehyde 3-phosphate: step 1/5. Catalyzes the oxidative phosphorylation of glyceraldehyde 3-phosphate (G3P) to 1,3-bisphosphoglycerate (BPG) using the cofactor NAD. The first reaction step involves the formation of a hemiacetal intermediate between G3P and a cysteine residue, and this hemiacetal intermediate is then oxidized to a thioester, with concomitant reduction of NAD to NADH. The reduced NADH is then exchanged with the second NAD, and the thioester is attacked by a nucleophilic inorganic phosphate to produce BPG. The chain is Glyceraldehyde-3-phosphate dehydrogenase (gap) from Kitasatospora aureofaciens (Streptomyces aureofaciens).